We begin with the raw amino-acid sequence, 440 residues long: Discs overgrown protein kinase (440 aa).

The region spanning 9–277 is the Protein kinase domain; that stretch reads YRLGRKIGSG…HLRKLFRNLF (269 aa). Residues 15 to 23 and lysine 38 contribute to the ATP site; that span reads IGSGSFGDI. The active-site Proton acceptor is aspartate 128. Residues 221-224 are nuclear localization signal; essential for interaction with Bdbt and important for nuclear localization; the sequence is KRQK. Phosphoserine is present on residues serine 333 and serine 334. The interval 376–440 is disordered; that stretch reads SQLIGGNGLN…GGGGGVGNAK (65 aa). Residues 413–440 are compositionally biased toward gly residues; that stretch reads QGGGGGGGGVGVGGMPSGGGGGGVGNAK.

This sequence belongs to the protein kinase superfamily. CK1 Ser/Thr protein kinase family. Casein kinase I subfamily. In terms of assembly, forms a complex with per. Interacts with Dlish. Interacts (via nuclear localization signal) with Bdbt. In terms of tissue distribution, detected in the head (at protein level). Expressed in photoreceptor cells of the eyes as well as in the region situated between the optic lobe and the central brain.

The protein localises to the nucleus. The protein resides in the cytoplasm. It is found in the cytosol. The enzyme catalyses L-seryl-[protein] + ATP = O-phospho-L-seryl-[protein] + ADP + H(+). It carries out the reaction L-threonyl-[protein] + ATP = O-phospho-L-threonyl-[protein] + ADP + H(+). In terms of biological role, serine/threonine-protein kinase which is involved in the circadian rhythm pathway, viability and planar cell polarity. In the circadian rhythm pathway, phosphorylates the clock gene period (per) and targets it for degradation in the absence of timeless (tim), thus contributing to production of the circadian oscillations of the clock genes. Together with CkIalpha, regulates processing of ci by phosphorylating it, which promotes its binding to slmb, the F-box recognition component of the SCF(slmb) E3 ubiquitin-protein ligase. Involved in the inhibition of apoptosis during cell proliferation and growth arrest in imaginal disks. Also functions in planar cell polarity. The chain is Discs overgrown protein kinase (dco) from Drosophila melanogaster (Fruit fly).